Consider the following 299-residue polypeptide: Beta-lactamase VEB-1 (299 aa).

The first 23 residues, 1 to 23, serve as a signal peptide directing secretion; that stretch reads MKIVKRILLVLLSLFFTIVYSNA. Ser-68 acts as the Nucleophile; acyl-ester intermediate in catalysis. Lys-71, Ser-131, and Glu-167 together coordinate a beta-lactam. Glu-167 functions as the Proton acceptor in the catalytic mechanism.

It belongs to the class-A beta-lactamase family.

The catalysed reaction is a beta-lactam + H2O = a substituted beta-amino acid. Inhibited by the beta-lactamase-blocking agent clavulanic acid. Its function is as follows. Class A beta-lactamase which confers resistance to the beta-lactam antibiotics, including penicillins and cephalosporins, in E.coli strain JM109. Acts via hydrolysis of the beta-lactam ring. Has penicillin-, and cephalosporin-hydrolyzing activities. This Pseudomonas aeruginosa protein is Beta-lactamase VEB-1.